Reading from the N-terminus, the 551-residue chain is Glucose-6-phosphate isomerase (551 aa).

D-glucose 6-phosphate-binding positions include 161–162, 212–217, Gln-356, Glu-360, His-391, and Lys-516; these read GS and SKTFTT. Residue Glu-360 is the Proton donor of the active site. Residues His-391 and Lys-516 contribute to the active site.

The protein belongs to the GPI family. Homodimer.

The protein localises to the cytoplasm. Its subcellular location is the cytosol. It carries out the reaction alpha-D-glucose 6-phosphate = beta-D-fructose 6-phosphate. Its pathway is carbohydrate degradation; glycolysis; D-glyceraldehyde 3-phosphate and glycerone phosphate from D-glucose: step 2/4. Its function is as follows. In the cytoplasm, catalyzes the conversion of glucose-6-phosphate to fructose-6-phosphate, the second step in glycolysis, and the reverse reaction during gluconeogenesis. This chain is Glucose-6-phosphate isomerase (gpi1), found in Agaricus bisporus (White button mushroom).